Here is a 139-residue protein sequence, read N- to C-terminus: Small ribosomal subunit protein uS12m (139 aa).

Residues M1 to P29 constitute a mitochondrion transit peptide. Residues H37–Q57 are disordered.

It belongs to the universal ribosomal protein uS12 family. As to quaternary structure, component of the mitochondrial ribosome small subunit (28S) which comprises a 12S rRNA and about 30 distinct proteins.

The protein resides in the mitochondrion. The chain is Small ribosomal subunit protein uS12m (MRPS12) from Bos taurus (Bovine).